The primary structure comprises 569 residues: CTP synthase (569 aa).

Positions 313-569 (RIAMVGKYTG…NASLERLKKM (257 aa)) constitute a Glutamine amidotransferase type-1 domain. Catalysis depends on Cys-410, which acts as the Nucleophile. Residues His-541 and Glu-543 contribute to the active site.

Belongs to the CTP synthase family.

It carries out the reaction UTP + L-glutamine + ATP + H2O = CTP + L-glutamate + ADP + phosphate + 2 H(+). The protein operates within pyrimidine metabolism; CTP biosynthesis via de novo pathway; CTP from UDP: step 2/2. Catalyzes the ATP-dependent amination of UTP to CTP with either L-glutamine or ammonia as the source of nitrogen. The chain is CTP synthase (ctps) from Dictyostelium discoideum (Social amoeba).